The following is a 444-amino-acid chain: Phosphoglucosamine mutase (444 aa).

Serine 101 serves as the catalytic Phosphoserine intermediate. Mg(2+)-binding residues include serine 101, aspartate 240, aspartate 242, and aspartate 244. At serine 101 the chain carries Phosphoserine.

The protein belongs to the phosphohexose mutase family. It depends on Mg(2+) as a cofactor. In terms of processing, activated by phosphorylation.

It carries out the reaction alpha-D-glucosamine 1-phosphate = D-glucosamine 6-phosphate. Its function is as follows. Catalyzes the conversion of glucosamine-6-phosphate to glucosamine-1-phosphate. The polypeptide is Phosphoglucosamine mutase (Aeromonas hydrophila subsp. hydrophila (strain ATCC 7966 / DSM 30187 / BCRC 13018 / CCUG 14551 / JCM 1027 / KCTC 2358 / NCIMB 9240 / NCTC 8049)).